Consider the following 91-residue polypeptide: Cell division topological specificity factor (91 aa).

This sequence belongs to the MinE family.

In terms of biological role, prevents the cell division inhibition by proteins MinC and MinD at internal division sites while permitting inhibition at polar sites. This ensures cell division at the proper site by restricting the formation of a division septum at the midpoint of the long axis of the cell. This Wigglesworthia glossinidia brevipalpis protein is Cell division topological specificity factor.